Reading from the N-terminus, the 529-residue chain is Phosphoenolpyruvate carboxykinase (ATP) (529 aa).

3 residues coordinate substrate: arginine 55, tyrosine 190, and lysine 196. ATP-binding positions include lysine 196, histidine 215, and 231–239 (GLSGTGKTT). The Mn(2+) site is built by lysine 196 and histidine 215. Aspartate 252 lines the Mn(2+) pocket. Residues glutamate 280, arginine 317, and threonine 442 each coordinate ATP. Arginine 317 provides a ligand contact to substrate.

Belongs to the phosphoenolpyruvate carboxykinase (ATP) family. The cofactor is Mn(2+).

It is found in the cytoplasm. It carries out the reaction oxaloacetate + ATP = phosphoenolpyruvate + ADP + CO2. It functions in the pathway carbohydrate biosynthesis; gluconeogenesis. Functionally, involved in the gluconeogenesis. Catalyzes the conversion of oxaloacetate (OAA) to phosphoenolpyruvate (PEP) through direct phosphoryl transfer between the nucleoside triphosphate and OAA. The polypeptide is Phosphoenolpyruvate carboxykinase (ATP) (Deinococcus geothermalis (strain DSM 11300 / CIP 105573 / AG-3a)).